The primary structure comprises 143 residues: Large-conductance mechanosensitive channel (143 aa).

Helical transmembrane passes span 16-36 (VMDL…TNSL), 40-60 (IIMP…NMFI), and 87-107 (GSFI…FMMV).

This sequence belongs to the MscL family. As to quaternary structure, homopentamer.

It is found in the cell inner membrane. Channel that opens in response to stretch forces in the membrane lipid bilayer. May participate in the regulation of osmotic pressure changes within the cell. This is Large-conductance mechanosensitive channel from Psychrobacter sp. (strain PRwf-1).